A 611-amino-acid chain; its full sequence is Dihydroxy-acid dehydratase (611 aa).

A Mg(2+)-binding site is contributed by aspartate 81. Cysteine 122 contacts [2Fe-2S] cluster. Residues aspartate 123 and lysine 124 each coordinate Mg(2+). Residue lysine 124 is modified to N6-carboxylysine. Position 195 (cysteine 195) interacts with [2Fe-2S] cluster. Glutamate 491 is a Mg(2+) binding site. Residue serine 517 is the Proton acceptor of the active site.

Belongs to the IlvD/Edd family. In terms of assembly, homodimer. [2Fe-2S] cluster serves as cofactor. The cofactor is Mg(2+).

The catalysed reaction is (2R)-2,3-dihydroxy-3-methylbutanoate = 3-methyl-2-oxobutanoate + H2O. It catalyses the reaction (2R,3R)-2,3-dihydroxy-3-methylpentanoate = (S)-3-methyl-2-oxopentanoate + H2O. It participates in amino-acid biosynthesis; L-isoleucine biosynthesis; L-isoleucine from 2-oxobutanoate: step 3/4. Its pathway is amino-acid biosynthesis; L-valine biosynthesis; L-valine from pyruvate: step 3/4. In terms of biological role, functions in the biosynthesis of branched-chain amino acids. Catalyzes the dehydration of (2R,3R)-2,3-dihydroxy-3-methylpentanoate (2,3-dihydroxy-3-methylvalerate) into 2-oxo-3-methylpentanoate (2-oxo-3-methylvalerate) and of (2R)-2,3-dihydroxy-3-methylbutanoate (2,3-dihydroxyisovalerate) into 2-oxo-3-methylbutanoate (2-oxoisovalerate), the penultimate precursor to L-isoleucine and L-valine, respectively. The polypeptide is Dihydroxy-acid dehydratase (Brucella melitensis biotype 1 (strain ATCC 23456 / CCUG 17765 / NCTC 10094 / 16M)).